A 324-amino-acid chain; its full sequence is MKSALCSRFFILLPWILIVIIMLDVDPRRPAPQLTSRPYFSPHAVGCGGSRVPLRRSSPGRDAAEKRNESRPQLQPEPRLPTIYAITPTYSRPVQKAELTRLANTFRQVAQLHWILVEDRATRSELVSSFLARAGLPNTHLHVPTPRRYKRPWLPRATEQRNAGLAWLRQRHQHQSAQPGVLFFADDDNTYSLELFQEMRTTRKVSVWPVGLVGGRRYERPLVKNGKVVGWYTGWREDRPFAIDMAGFAVSLQVILSNPKAVFKRRGSQPGMQESDFLKQITTVEELEPKASNCTKVLVWHTRTEKVNLANEPKYHLDTVNIEV.

Over 1–2 the chain is Cytoplasmic; it reads MK. Residues 3–23 traverse the membrane as a helical; Signal-anchor for type II membrane protein segment; sequence SALCSRFFILLPWILIVIIML. The Lumenal portion of the chain corresponds to 24-324; sequence DVDPRRPAPQ…YHLDTVNIEV (301 aa). Residues 50–78 form a disordered region; sequence SRVPLRRSSPGRDAAEKRNESRPQLQPEP. N-linked (GlcNAc...) asparagine glycosylation occurs at Asn-68. Residues 88 to 90, Asp-119, Arg-156, Arg-161, and 186 to 188 contribute to the UDP-alpha-D-glucuronate site; these read PTY and DDD. Asp-188 contacts Mn(2+). Positions 235 to 244 are interaction with galactose moiety of substrate glycoprotein; that stretch reads WREDRPFAID. Glu-274 acts as the Proton donor/acceptor in catalysis. The N-linked (GlcNAc...) asparagine glycan is linked to Asn-293. 301 to 303 lines the UDP-alpha-D-glucuronate pocket; the sequence is HTR.

This sequence belongs to the glycosyltransferase 43 family. As to quaternary structure, homodimer. Mn(2+) serves as cofactor. As to expression, expressed in brain, but not in liver and kidney.

The protein resides in the golgi apparatus membrane. It carries out the reaction 3-O-(beta-D-galactosyl-(1-&gt;3)-beta-D-galactosyl-(1-&gt;4)-beta-D-xylosyl)-L-seryl-[protein] + UDP-alpha-D-glucuronate = 3-O-(beta-D-GlcA-(1-&gt;3)-beta-D-Gal-(1-&gt;3)-beta-D-Gal-(1-&gt;4)-beta-D-Xyl)-L-seryl-[protein] + UDP + H(+). The protein operates within protein modification; protein glycosylation. Functionally, involved in the biosynthesis of L2/HNK-1 carbohydrate epitope on both glycolipids and glycoproteins. In Mus musculus (Mouse), this protein is Galactosylgalactosylxylosylprotein 3-beta-glucuronosyltransferase 2 (B3gat2).